Reading from the N-terminus, the 1194-residue chain is Metabotropic glutamate receptor 1 (1194 aa).

Residues 1-18 form the signal peptide; it reads MVGLLLFFFPAIFLEVSL. Residues 19–592 lie on the Extracellular side of the membrane; it reads LPRSPGRKVL…VRYLEWSNIE (574 aa). A disulfide bridge connects residues Cys-67 and Cys-109. Tyr-74 serves as a coordination point for L-glutamate. Asn-98 carries an N-linked (GlcNAc...) asparagine glycan. L-glutamate contacts are provided by residues Ser-165 and 186–188; that span reads SAT. Asn-223 carries N-linked (GlcNAc...) asparagine glycosylation. Tyr-236 contributes to the L-glutamate binding site. Cys-289 and Cys-291 are disulfide-bonded. Residue Asp-318 participates in L-glutamate binding. A disulfide bridge connects residues Cys-378 and Cys-394. Asn-397 carries N-linked (GlcNAc...) asparagine glycosylation. Lys-409 lines the L-glutamate pocket. Cys-432 and Cys-439 are disulfide-bonded. An N-linked (GlcNAc...) asparagine glycan is attached at Asn-515. The helical transmembrane segment at 593–615 threads the bilayer; sequence SIIAIAFSCLGILVTLFVTLIFV. At 616–629 the chain is on the cytoplasmic side; sequence LYRDTPVVKSSSRE. A helical membrane pass occupies residues 630–650; sequence LCYIILAGIFLGYVCPFTLIA. The Extracellular segment spans residues 651–658; sequence KPTTTSCY. A disulfide bridge links Cys-657 with Cys-746. A helical transmembrane segment spans residues 659–680; it reads LQRLLVGLSSAMCYSALVTKTN. The Cytoplasmic segment spans residues 681–703; sequence RIARILAGSKKKICTRKPRFMSA. The helical transmembrane segment at 704 to 727 threads the bilayer; it reads WAQVIIASILISVQLTLVVTLIIM. Over 728-750 the chain is Extracellular; that stretch reads EPPMPILSYPSIKEVYLICNTSN. A helical membrane pass occupies residues 751–772; it reads LGVVAPLGYNGLLIMSCTYYAF. Residues 773-785 are Cytoplasmic-facing; it reads KTRNVPANFNEAK. A helical transmembrane segment spans residues 786–807; it reads YIAFTMYTTCIIWLAFVPIYFG. At 808-815 the chain is on the extracellular side; it reads SNYKIITT. The chain crosses the membrane as a helical span at residues 816–840; it reads CFAVSLSVTVALGCMFTPKMYIIIA. The Cytoplasmic segment spans residues 841–1194; it reads KPERNVRSAF…RDYKQSSSTL (354 aa). Phosphoserine is present on Ser-853. Thr-871 carries the phosphothreonine modification. The segment at 883–905 is disordered; sequence AGNANSNGKSVSWSEPGGGQVPK. The span at 885–895 shows a compositional bias: polar residues; the sequence is NANSNGKSVSW. Phosphoserine is present on residues Ser-894 and Ser-969. The interval 1007 to 1030 is disordered; it reads PALPKGLPPPLQQQQQPPPQQKSL. Pro residues predominate over residues 1012–1026; that stretch reads GLPPPLQQQQQPPPQ. The residue at position 1091 (Ser-1091) is a Phosphoserine. The interval 1113 to 1173 is disordered; it reads HEREGNTEED…SPVSESVLCT (61 aa). Acidic residues predominate over residues 1119 to 1131; sequence TEEDELEEEEEDL. Position 1142 is a phosphoserine (Ser-1142). Phosphothreonine is present on Thr-1146. Ser-1149 is subject to Phosphoserine. The segment covering 1154–1170 has biased composition (low complexity); sequence SVASGSSVPSSPVSESV.

This sequence belongs to the G-protein coupled receptor 3 family. In terms of assembly, homodimer; disulfide-linked. The PPXXF motif binds HOMER1, HOMER2 and HOMER3. Interacts with TAMALIN. Interacts with RYR1, RYR2, ITPR1, SHANK1 and SHANK3. Interacts with SIAH1. Detected in brain.

Its subcellular location is the cell membrane. The protein localises to the postsynaptic cell membrane. It is found in the cell projection. It localises to the dendrite. With respect to regulation, signaling is inhibited by the antagonist LY341495. The LY341495 binding site partially overlaps with the glutamate binding site. Signaling is also inhibited by synthetic allosteric regulators, such as FITM (4-fluoro-N-(4-(6-(isopropylamino)pyrimidin-4-yl)thiazol-2-yl)-N-methylbenzamide) that bind in a pocket between the transmembrane helices. G-protein coupled receptor for glutamate. Ligand binding causes a conformation change that triggers signaling via guanine nucleotide-binding proteins (G proteins) and modulates the activity of down-stream effectors. Signaling activates a phosphatidylinositol-calcium second messenger system. May participate in the central action of glutamate in the CNS, such as long-term potentiation in the hippocampus and long-term depression in the cerebellum. May function in the light response in the retina. Induces GRID1 and GRID2 cation-channel activation via GNAQ-PLC-PKC pathway in dopaminergic neurons and cerebellar Purkinje cell, respectively. This chain is Metabotropic glutamate receptor 1 (GRM1), found in Homo sapiens (Human).